Here is a 347-residue protein sequence, read N- to C-terminus: NADH-ubiquinone oxidoreductase chain 2 (347 aa).

The next 9 helical transmembrane spans lie at 3 to 23 (PLALSLILTTLLAGTLITMMS), 59 to 79 (YFMTQAMASMMLMMALTINLM), 93 to 115 (VASNMALMALMTKLGSAPFHFWV), 150 to 170 (NTNLIYLSGLLSILIGGWGGL), 178 to 198 (ILAYSSISHMGWMLIILPFNP), 199 to 219 (TLTLLNLTIYIMLTLSIFMIL), 242 to 262 (IMLMTTLLSLGGLPPLSGFMP), 274 to 294 (NSIIMPLTMAIMALLNMYFYM), and 326 to 346 (LPTLITLSNMLLPLTPMISML).

This sequence belongs to the complex I subunit 2 family. In terms of assembly, core subunit of respiratory chain NADH dehydrogenase (Complex I) which is composed of 45 different subunits. Interacts with TMEM242.

The protein resides in the mitochondrion inner membrane. It catalyses the reaction a ubiquinone + NADH + 5 H(+)(in) = a ubiquinol + NAD(+) + 4 H(+)(out). Core subunit of the mitochondrial membrane respiratory chain NADH dehydrogenase (Complex I) which catalyzes electron transfer from NADH through the respiratory chain, using ubiquinone as an electron acceptor. Essential for the catalytic activity and assembly of complex I. The protein is NADH-ubiquinone oxidoreductase chain 2 of Loxodonta africana (African elephant).